Here is a 224-residue protein sequence, read N- to C-terminus: Phosphoribosylformylglycinamidine synthase subunit PurQ (224 aa).

Residues 2-224 (KFAVIVFPGS…IVDNFVKGGV (223 aa)) enclose the Glutamine amidotransferase type-1 domain. Catalysis depends on Cys-86, which acts as the Nucleophile. Catalysis depends on residues His-194 and Glu-196.

In terms of assembly, part of the FGAM synthase complex composed of 1 PurL, 1 PurQ and 2 PurS subunits.

The protein resides in the cytoplasm. It catalyses the reaction N(2)-formyl-N(1)-(5-phospho-beta-D-ribosyl)glycinamide + L-glutamine + ATP + H2O = 2-formamido-N(1)-(5-O-phospho-beta-D-ribosyl)acetamidine + L-glutamate + ADP + phosphate + H(+). The catalysed reaction is L-glutamine + H2O = L-glutamate + NH4(+). It participates in purine metabolism; IMP biosynthesis via de novo pathway; 5-amino-1-(5-phospho-D-ribosyl)imidazole from N(2)-formyl-N(1)-(5-phospho-D-ribosyl)glycinamide: step 1/2. Part of the phosphoribosylformylglycinamidine synthase complex involved in the purines biosynthetic pathway. Catalyzes the ATP-dependent conversion of formylglycinamide ribonucleotide (FGAR) and glutamine to yield formylglycinamidine ribonucleotide (FGAM) and glutamate. The FGAM synthase complex is composed of three subunits. PurQ produces an ammonia molecule by converting glutamine to glutamate. PurL transfers the ammonia molecule to FGAR to form FGAM in an ATP-dependent manner. PurS interacts with PurQ and PurL and is thought to assist in the transfer of the ammonia molecule from PurQ to PurL. In Caldanaerobacter subterraneus subsp. tengcongensis (strain DSM 15242 / JCM 11007 / NBRC 100824 / MB4) (Thermoanaerobacter tengcongensis), this protein is Phosphoribosylformylglycinamidine synthase subunit PurQ.